The sequence spans 551 residues: Cation/acetate symporter ActP (551 aa).

The next 14 helical transmembrane spans lie at 5-25 (HWSALSLFVLPALAQAEALTG), 34-54 (IQAIVMFLLFVGGTLYITYWA), 77-97 (GLAIAGDYMSAASFLGISALV), 104-124 (GLIYSIGFLIGWPIILFLIAE), 150-170 (LSACGSLVVVALYLIAQMVGA), 184-204 (VAVVLVGILMVLYVLFGGMLA), 207-227 (WVQIIKAVMLLSGATFMAIMV), 263-283 (ISALSLGLALMFGTAGLPHIL), 304-324 (GFIGYFYILTFIIGFGAILLV), 356-376 (FFLGFISAVAFATILAVVAGL), 406-426 (VSKITVIILGIVAIGLGILFE), 430-450 (IAFMVGLAFSIAASCNFPIII), 469-489 (LGLSTAVILMILGPTIWVTIL), and 498-518 (YEYPALFSMIAAFVGTWFFSI).

This sequence belongs to the sodium:solute symporter (SSF) (TC 2.A.21) family.

The protein localises to the cell inner membrane. In terms of biological role, transports acetate. The sequence is that of Cation/acetate symporter ActP from Yersinia pestis bv. Antiqua (strain Antiqua).